Consider the following 250-residue polypeptide: Non-specific acid phosphatase (250 aa).

A signal peptide spans 1–20 (MKSRYLVFFLPLIVAKYTSA).

The protein belongs to the class A bacterial acid phosphatase family. Homodimer.

Its subcellular location is the periplasm. The catalysed reaction is a phosphate monoester + H2O = an alcohol + phosphate. The protein is Non-specific acid phosphatase (phoN) of Salmonella typhimurium (strain LT2 / SGSC1412 / ATCC 700720).